A 296-amino-acid chain; its full sequence is Polyadenylate-binding protein 2 (296 aa).

The disordered stretch occupies residues 1-102 (MAAVSSAASL…EEEPGELTGD (102 aa)). Gly residues-rich tracts occupy residues 19 to 31 (LRGG…GGQD) and 71 to 82 (GRGGSGGGGAGG). The segment covering 84-97 (EELEDEELEEEEPG) has biased composition (acidic residues). Positions 107 to 141 (DPELEAIKARVREMEEEAEKLKELQNEVEKQMNMS) form a coiled coil. Residues 146 to 296 (NAGPVIMSIE…ARVTSWYTPY (151 aa)) are necessary for homooligomerization. An RRM domain is found at 163 to 240 (RSIYVGNVDY…RQIKVVPKRT (78 aa)).

In terms of assembly, monomer and homooligomer. Binds RNA as a monomer and oligomerizes when bound to poly(A).

Its subcellular location is the nucleus. The protein localises to the cytoplasm. Involved in the 3'-end formation of mRNA precursors (pre-mRNA) by the addition of a poly(A) tail of 200-250 nt to the upstream cleavage product. Stimulates poly(A) polymerase (PAPOLA) conferring processivity on the poly(A) tail elongation reaction and also controls the poly(A) tail length. Increases the affinity of poly(A) polymerase for RNA. Binds to poly(A) and to poly(G) with high affinity. May protect the poly(A) tail from degradation. The protein is Polyadenylate-binding protein 2 of Xenopus tropicalis (Western clawed frog).